A 389-amino-acid polypeptide reads, in one-letter code: Chalcone synthase 2 (389 aa).

Cysteine 164 is a catalytic residue.

Belongs to the thiolase-like superfamily. Chalcone/stilbene synthases family.

It carries out the reaction (E)-4-coumaroyl-CoA + 3 malonyl-CoA + 3 H(+) = 2',4,4',6'-tetrahydroxychalcone + 3 CO2 + 4 CoA. It functions in the pathway secondary metabolite biosynthesis; flavonoid biosynthesis. In terms of biological role, the primary product of this enzyme is 4,2',4',6'-tetrahydroxychalcone (also termed naringenin-chalcone or chalcone) which can under specific conditions spontaneously isomerize into naringenin. This Trifolium subterraneum (Subterranean clover) protein is Chalcone synthase 2 (CHS2).